A 247-amino-acid chain; its full sequence is Cell division protein ZapD (247 aa).

Belongs to the ZapD family. As to quaternary structure, interacts with FtsZ.

Its subcellular location is the cytoplasm. Functionally, cell division factor that enhances FtsZ-ring assembly. Directly interacts with FtsZ and promotes bundling of FtsZ protofilaments, with a reduction in FtsZ GTPase activity. This is Cell division protein ZapD from Citrobacter koseri (strain ATCC BAA-895 / CDC 4225-83 / SGSC4696).